Consider the following 401-residue polypeptide: MSLGNARPLVSVYTEKNEPAKDKNICLPAVFKAPIRPDVVNEVHQLLRRNNRQAYAVSELAGHQTSAESWGTGRAVARIPRVRGGGTHRSGQGAFGNMCRGGRMFAPTKTFRRWHRKVNVNQRRYALVSAIAASGVPALVQSKGHVIDGVSEFPLVVSDEVQKVQKTKQAVIFLRRLKIWADIQKVYKSQRFRAGRGTMRDRRRIARRGPLVVYDKDEGLRKAFRNIPGIETINVDKLNLLKLAPGGHVGRFVIWTESAFARLNDLFGTWKKPSTLKKGYNLPQPKMANTDLSRLLKSEEIRKVLRDPRKRVFRSVRRLNPLTNVRQLIKLNPYAEVLKRRAALAAEKRTVAKVLAKAKKQNVELAKSHFANVATKAAANRAKLLAARKKKVAAKKPAAKK.

It belongs to the universal ribosomal protein uL4 family.

This Drosophila melanogaster (Fruit fly) protein is Large ribosomal subunit protein uL4 (RpL4).